The chain runs to 338 residues: Protein pelota homolog (338 aa).

It belongs to the eukaryotic release factor 1 family. Pelota subfamily. In terms of assembly, monomer. Requires a divalent metal cation as cofactor.

The protein localises to the cytoplasm. Functionally, may function in recognizing stalled ribosomes, interact with stem-loop structures in stalled mRNA molecules, and effect endonucleolytic cleavage of the mRNA. May play a role in the release non-functional ribosomes and degradation of damaged mRNAs. Has endoribonuclease activity. This is Protein pelota homolog from Caldivirga maquilingensis (strain ATCC 700844 / DSM 13496 / JCM 10307 / IC-167).